Reading from the N-terminus, the 493-residue chain is EGF-containing fibulin-like extracellular matrix protein 1 (493 aa).

An N-terminal signal peptide occupies residues 1–17 (MLKALFLTMLTLALVKS). In terms of domain architecture, EGF-like 1; atypical spans 26 to 71 (YTQCTDGYEWDPVRQQCKDIDECDIVPDACKGGMKCVNHYGGYLCL). The 41-residue stretch at 173-213 (DIDECTAGTHNCRADQVCINLRGSFACQCPPGYQKRGEQCV) folds into the EGF-like 2; calcium-binding domain. 15 cysteine pairs are disulfide-bonded: C177-C190, C184-C199, C201-C212, C218-C228, C224-C237, C239-C252, C258-C268, C264-C277, C279-C292, C298-C309, C305-C318, C320-C332, C338-C350, C344-C359, and C365-C377. The EGF-like 3; calcium-binding domain maps to 214–253 (DIDECTIPPYCHQRCVNTPGSFYCQCSPGFQLAANNYTCV). A glycan (N-linked (GlcNAc...) asparagine) is linked at N249. An EGF-like 4; calcium-binding domain is found at 254 to 293 (DINECDASNQCAQQCYNILGSFICQCNQGYELSSDRLNCE). The segment at 259-493 (DASNQCAQQC…LTIIVGPFSF (235 aa)) is mediates interaction with TIMP3. The region spanning 294–333 (DIDECRTSSYLCQYQCVNEPGKFSCMCPQGYQVVRSRTCQ) is the EGF-like 5; calcium-binding domain. One can recognise an EGF-like 6; calcium-binding domain in the interval 334 to 378 (DINECETTNECREDEMCWNYHGGFRCYPRNPCQDPYILTPENRCV).

This sequence belongs to the fibulin family. As to quaternary structure, interacts with ECM1. Interacts with TIMP3.

It is found in the secreted. The protein localises to the extracellular space. Its subcellular location is the extracellular matrix. In terms of biological role, binds EGFR, the EGF receptor, inducing EGFR autophosphorylation and the activation of downstream signaling pathways. May play a role in cell adhesion and migration. May function as a negative regulator of chondrocyte differentiation. In the olfactory epithelium, it may regulate glial cell migration, differentiation and the ability of glial cells to support neuronal neurite outgrowth. The protein is EGF-containing fibulin-like extracellular matrix protein 1 (EFEMP1) of Macaca fascicularis (Crab-eating macaque).